We begin with the raw amino-acid sequence, 382 residues long: Deoxyhypusine synthase (382 aa).

Residues 108 to 112 (SNLIS), 134 to 136 (TAG), Glu-140, and Asp-257 contribute to the NAD(+) site. Position 139–140 (139–140 (EE)) interacts with spermidine. Spermidine is bound at residue Asp-262. Gly-304 is an NAD(+) binding site. His-309 lines the spermidine pocket. 329 to 330 (TG) provides a ligand contact to NAD(+). Spermidine is bound by residues 335 to 337 (GSD) and 344 to 350 (EAVSWGK). Lys-350 serves as the catalytic Nucleophile. 363–364 (DV) lines the NAD(+) pocket.

It belongs to the deoxyhypusine synthase family. Requires NAD(+) as cofactor.

The enzyme catalyses [eIF5A protein]-L-lysine + spermidine = [eIF5A protein]-deoxyhypusine + propane-1,3-diamine. It functions in the pathway protein modification; eIF5A hypusination. Its function is as follows. Catalyzes the NAD-dependent oxidative cleavage of spermidine and the subsequent transfer of the butylamine moiety of spermidine to the epsilon-amino group of a specific lysine residue of the eIF-5A precursor protein to form the intermediate deoxyhypusine residue. The polypeptide is Deoxyhypusine synthase (DYS1) (Eremothecium gossypii (strain ATCC 10895 / CBS 109.51 / FGSC 9923 / NRRL Y-1056) (Yeast)).